A 650-amino-acid polypeptide reads, in one-letter code: Threonine--tRNA ligase (650 aa).

The TGS domain maps to 1-66 (MVQITLPDGS…DQDAKLAIVT (66 aa)). The tract at residues 247-538 (DHRKIGRDLD…LIENHAGAMP (292 aa)) is catalytic. Zn(2+) contacts are provided by Cys-338, His-389, and His-515.

This sequence belongs to the class-II aminoacyl-tRNA synthetase family. Homodimer. Requires Zn(2+) as cofactor.

The protein localises to the cytoplasm. The catalysed reaction is tRNA(Thr) + L-threonine + ATP = L-threonyl-tRNA(Thr) + AMP + diphosphate + H(+). In terms of biological role, catalyzes the attachment of threonine to tRNA(Thr) in a two-step reaction: L-threonine is first activated by ATP to form Thr-AMP and then transferred to the acceptor end of tRNA(Thr). Also edits incorrectly charged L-seryl-tRNA(Thr). This Bordetella avium (strain 197N) protein is Threonine--tRNA ligase.